We begin with the raw amino-acid sequence, 162 residues long: NADH-ubiquinone oxidoreductase subunit 8 (162 aa).

4Fe-4S ferredoxin-type domains are found at residues 54-83 (RRYQ…IESE) and 93-122 (TRYD…EGPN). [4Fe-4S] cluster is bound by residues cysteine 63, cysteine 66, cysteine 69, cysteine 73, cysteine 102, cysteine 105, cysteine 108, and cysteine 112.

This sequence belongs to the complex I 23 kDa subunit family. It depends on [4Fe-4S] cluster as a cofactor.

The protein localises to the mitochondrion. The enzyme catalyses a ubiquinone + NADH + 5 H(+)(in) = a ubiquinol + NAD(+) + 4 H(+)(out). Functionally, core subunit of the mitochondrial membrane respiratory chain NADH dehydrogenase (Complex I) that is believed to belong to the minimal assembly required for catalysis. Complex I functions in the transfer of electrons from NADH to the respiratory chain. The immediate electron acceptor for the enzyme is believed to be ubiquinone. May donate electrons to ubiquinone. The sequence is that of NADH-ubiquinone oxidoreductase subunit 8 (NAD8) from Reclinomonas americana.